We begin with the raw amino-acid sequence, 174 residues long: Small ribosomal subunit protein uS5 (174 aa).

Positions 19 to 82 (LREKMIAVNR…EQARRGMFKV (64 aa)) constitute an S5 DRBM domain.

Belongs to the universal ribosomal protein uS5 family. As to quaternary structure, part of the 30S ribosomal subunit. Contacts proteins S4 and S8.

Its function is as follows. With S4 and S12 plays an important role in translational accuracy. Located at the back of the 30S subunit body where it stabilizes the conformation of the head with respect to the body. In Bordetella bronchiseptica (strain ATCC BAA-588 / NCTC 13252 / RB50) (Alcaligenes bronchisepticus), this protein is Small ribosomal subunit protein uS5.